The primary structure comprises 724 residues: Probable methyltransferase PMT28 (724 aa).

The Cytoplasmic segment spans residues 1–22; that stretch reads MMERKREMGIAYFARRIKQPRG. A helical; Signal-anchor for type II membrane protein membrane pass occupies residues 23–43; that stretch reads IWVKMTFIVVLGLCFVFFWSF. The Lumenal segment spans residues 44–724; sequence LSSSASTFNV…LCAQKTLWRP (681 aa). The interval 63 to 211 is disordered; that stretch reads EPVSSRTKSA…ISKKRKRKGP (149 aa). Basic and acidic residues predominate over residues 71 to 98; sequence SAHEVSESSKLHERGKVESGSKSKEGKK. Residues 107-125 are compositionally biased toward basic residues; that stretch reads HETKKKKEHAVSHPHKKKD. Basic and acidic residues predominate over residues 126-140; that stretch reads VPKPVVEEVVVKEDQ. A compositionally biased stretch (acidic residues) spans 141-173; it reads EHEEAESDDSDQSNKEDGEEGTESDGNEGESDG. Residues asparagine 305, asparagine 316, and asparagine 568 are each glycosylated (N-linked (GlcNAc...) asparagine).

The protein belongs to the methyltransferase superfamily.

Its subcellular location is the golgi apparatus membrane. The sequence is that of Probable methyltransferase PMT28 from Arabidopsis thaliana (Mouse-ear cress).